The following is a 71-amino-acid chain: Small ribosomal subunit protein bS21 (71 aa).

The segment at 47 to 71 (RENATRAKRHAKRVARENARNTRLY) is disordered. Residues 60–71 (VARENARNTRLY) show a composition bias toward basic and acidic residues.

The protein belongs to the bacterial ribosomal protein bS21 family.

This is Small ribosomal subunit protein bS21 from Actinobacillus succinogenes (strain ATCC 55618 / DSM 22257 / CCUG 43843 / 130Z).